A 206-amino-acid chain; its full sequence is Pyridoxine/pyridoxamine 5'-phosphate oxidase (206 aa).

FMN-binding positions include 54-59, 69-70, Arg-75, Lys-76, and Gln-98; these read RVVLLK and YT. Position 59 (Lys-59) interacts with substrate. Substrate contacts are provided by Tyr-116, Arg-120, and Ser-124. Residues 133 to 134 and Trp-178 contribute to the FMN site; that span reads QS. Residue 184-186 participates in substrate binding; that stretch reads RLH. Residue Arg-188 coordinates FMN.

This sequence belongs to the pyridoxamine 5'-phosphate oxidase family. In terms of assembly, homodimer. Requires FMN as cofactor.

It catalyses the reaction pyridoxamine 5'-phosphate + O2 + H2O = pyridoxal 5'-phosphate + H2O2 + NH4(+). The catalysed reaction is pyridoxine 5'-phosphate + O2 = pyridoxal 5'-phosphate + H2O2. Its pathway is cofactor metabolism; pyridoxal 5'-phosphate salvage; pyridoxal 5'-phosphate from pyridoxamine 5'-phosphate: step 1/1. It participates in cofactor metabolism; pyridoxal 5'-phosphate salvage; pyridoxal 5'-phosphate from pyridoxine 5'-phosphate: step 1/1. Its function is as follows. Catalyzes the oxidation of either pyridoxine 5'-phosphate (PNP) or pyridoxamine 5'-phosphate (PMP) into pyridoxal 5'-phosphate (PLP). This is Pyridoxine/pyridoxamine 5'-phosphate oxidase from Anaplasma phagocytophilum (strain HZ).